The chain runs to 292 residues: Bis(5'-nucleosyl)-tetraphosphatase, symmetrical (292 aa).

The tract at residues 271–292 (LSIEHPRHTHTPRRQAKKHSKK) is disordered. Residues 277-292 (RHTHTPRRQAKKHSKK) are compositionally biased toward basic residues.

Belongs to the Ap4A hydrolase family.

The catalysed reaction is P(1),P(4)-bis(5'-adenosyl) tetraphosphate + H2O = 2 ADP + 2 H(+). Functionally, hydrolyzes diadenosine 5',5'''-P1,P4-tetraphosphate to yield ADP. This Xylella fastidiosa (strain 9a5c) protein is Bis(5'-nucleosyl)-tetraphosphatase, symmetrical (apaH).